A 356-amino-acid polypeptide reads, in one-letter code: UDP-N-acetylglucosamine--N-acetylmuramyl-(pentapeptide) pyrophosphoryl-undecaprenol N-acetylglucosamine transferase (356 aa).

Residues serine 198 and glutamine 289 each contribute to the UDP-N-acetyl-alpha-D-glucosamine site.

This sequence belongs to the glycosyltransferase 28 family. MurG subfamily.

It localises to the cell membrane. It carries out the reaction Mur2Ac(oyl-L-Ala-gamma-D-Glu-L-Lys-D-Ala-D-Ala)-di-trans,octa-cis-undecaprenyl diphosphate + UDP-N-acetyl-alpha-D-glucosamine = beta-D-GlcNAc-(1-&gt;4)-Mur2Ac(oyl-L-Ala-gamma-D-Glu-L-Lys-D-Ala-D-Ala)-di-trans,octa-cis-undecaprenyl diphosphate + UDP + H(+). It participates in cell wall biogenesis; peptidoglycan biosynthesis. Cell wall formation. Catalyzes the transfer of a GlcNAc subunit on undecaprenyl-pyrophosphoryl-MurNAc-pentapeptide (lipid intermediate I) to form undecaprenyl-pyrophosphoryl-MurNAc-(pentapeptide)GlcNAc (lipid intermediate II). This Streptococcus thermophilus (strain CNRZ 1066) protein is UDP-N-acetylglucosamine--N-acetylmuramyl-(pentapeptide) pyrophosphoryl-undecaprenol N-acetylglucosamine transferase.